We begin with the raw amino-acid sequence, 305 residues long: Protoheme IX farnesyltransferase 1 (305 aa).

Helical transmembrane passes span 22-42 (IKTG…TLAL), 53-73 (IPEI…AGAF), 94-114 (VTGD…TIFG), 115-135 (LVFL…GLFL), 154-174 (IGSV…YPDV), 179-199 (IIGL…AIAI), 230-250 (LVIL…LMLV), and 283-303 (LFHM…GIFF).

Belongs to the UbiA prenyltransferase family. Protoheme IX farnesyltransferase subfamily. In terms of assembly, interacts with CtaA.

The protein localises to the cell membrane. It carries out the reaction heme b + (2E,6E)-farnesyl diphosphate + H2O = Fe(II)-heme o + diphosphate. It participates in porphyrin-containing compound metabolism; heme O biosynthesis; heme O from protoheme: step 1/1. Functionally, converts heme B (protoheme IX) to heme O by substitution of the vinyl group on carbon 2 of heme B porphyrin ring with a hydroxyethyl farnesyl side group. The sequence is that of Protoheme IX farnesyltransferase 1 from Bacillus cytotoxicus (strain DSM 22905 / CIP 110041 / 391-98 / NVH 391-98).